We begin with the raw amino-acid sequence, 447 residues long: tRNA-2-methylthio-N(6)-dimethylallyladenosine synthase (447 aa).

An MTTase N-terminal domain is found at 4–120 (RSFFIKTYGC…INELLERSRT (117 aa)). Residues Cys13, Cys49, Cys83, Cys161, Cys165, and Cys168 each contribute to the [4Fe-4S] cluster site. The Radical SAM core domain maps to 147-382 (HEGEFRKFVT…QARQDEIGLE (236 aa)). The TRAM domain occupies 385–446 (QEYIGTTQEV…QHSLRGSIVE (62 aa)).

It belongs to the methylthiotransferase family. MiaB subfamily. As to quaternary structure, monomer. Requires [4Fe-4S] cluster as cofactor.

The protein localises to the cytoplasm. It catalyses the reaction N(6)-dimethylallyladenosine(37) in tRNA + (sulfur carrier)-SH + AH2 + 2 S-adenosyl-L-methionine = 2-methylsulfanyl-N(6)-dimethylallyladenosine(37) in tRNA + (sulfur carrier)-H + 5'-deoxyadenosine + L-methionine + A + S-adenosyl-L-homocysteine + 2 H(+). Functionally, catalyzes the methylthiolation of N6-(dimethylallyl)adenosine (i(6)A), leading to the formation of 2-methylthio-N6-(dimethylallyl)adenosine (ms(2)i(6)A) at position 37 in tRNAs that read codons beginning with uridine. The protein is tRNA-2-methylthio-N(6)-dimethylallyladenosine synthase of Desulfotalea psychrophila (strain LSv54 / DSM 12343).